A 175-amino-acid chain; its full sequence is Crossover junction endodeoxyribonuclease RuvC (175 aa).

Catalysis depends on residues D8, E67, and D139. Mg(2+) is bound by residues D8, E67, and D139.

It belongs to the RuvC family. Homodimer which binds Holliday junction (HJ) DNA. The HJ becomes 2-fold symmetrical on binding to RuvC with unstacked arms; it has a different conformation from HJ DNA in complex with RuvA. In the full resolvosome a probable DNA-RuvA(4)-RuvB(12)-RuvC(2) complex forms which resolves the HJ. Mg(2+) serves as cofactor.

The protein localises to the cytoplasm. It carries out the reaction Endonucleolytic cleavage at a junction such as a reciprocal single-stranded crossover between two homologous DNA duplexes (Holliday junction).. The RuvA-RuvB-RuvC complex processes Holliday junction (HJ) DNA during genetic recombination and DNA repair. Endonuclease that resolves HJ intermediates. Cleaves cruciform DNA by making single-stranded nicks across the HJ at symmetrical positions within the homologous arms, yielding a 5'-phosphate and a 3'-hydroxyl group; requires a central core of homology in the junction. The consensus cleavage sequence is 5'-(A/T)TT(C/G)-3'. Cleavage occurs on the 3'-side of the TT dinucleotide at the point of strand exchange. HJ branch migration catalyzed by RuvA-RuvB allows RuvC to scan DNA until it finds its consensus sequence, where it cleaves and resolves the cruciform DNA. This chain is Crossover junction endodeoxyribonuclease RuvC, found in Marinobacter nauticus (strain ATCC 700491 / DSM 11845 / VT8) (Marinobacter aquaeolei).